The sequence spans 156 residues: Hemerythrin-like protein (156 aa).

H54, H84, E88, H109, H113, H142, and D147 together coordinate Fe cation.

The protein belongs to the hemerythrin family.

In terms of biological role, oxygen-binding protein. The oxygen-binding site contains two iron atoms. This is Hemerythrin-like protein from Nematostella vectensis (Starlet sea anemone).